We begin with the raw amino-acid sequence, 279 residues long: Mirror-image polydactyly gene 1 protein homolog (279 aa).

Residues 1 to 11 (MNSEQSIRELG) are compositionally biased toward basic and acidic residues. A disordered region spans residues 1-21 (MNSEQSIRELGNEVPSEDLEL). 2 coiled-coil regions span residues 65-169 (LNKE…MLEN) and 218-255 (AEEM…STNN). The interval 247–268 (KQNQTSTNNTKHPTAKNNQEHT) is disordered. Residues 248–263 (QNQTSTNNTKHPTAKN) are compositionally biased toward polar residues.

The chain is Mirror-image polydactyly gene 1 protein homolog (Mipol1) from Mus musculus (Mouse).